An 84-amino-acid polypeptide reads, in one-letter code: Cytochrome b559 subunit alpha (84 aa).

Residues 22–36 (IIHSITIPSLFVAGF) form a helical membrane-spanning segment. A heme-binding site is contributed by His24.

Belongs to the PsbE/PsbF family. As to quaternary structure, heterodimer of an alpha subunit and a beta subunit. PSII is composed of 1 copy each of membrane proteins PsbA, PsbB, PsbC, PsbD, PsbE, PsbF, PsbH, PsbI, PsbJ, PsbK, PsbL, PsbM, PsbT, PsbX, PsbY, PsbZ, Psb30/Ycf12, at least 3 peripheral proteins of the oxygen-evolving complex and a large number of cofactors. It forms dimeric complexes. Heme b is required as a cofactor.

The protein resides in the plastid. It localises to the chloroplast thylakoid membrane. This b-type cytochrome is tightly associated with the reaction center of photosystem II (PSII). PSII is a light-driven water:plastoquinone oxidoreductase that uses light energy to abstract electrons from H(2)O, generating O(2) and a proton gradient subsequently used for ATP formation. It consists of a core antenna complex that captures photons, and an electron transfer chain that converts photonic excitation into a charge separation. This chain is Cytochrome b559 subunit alpha, found in Emiliania huxleyi (Coccolithophore).